The sequence spans 621 residues: pH-response transcription factor pacc-1 (621 aa).

Residues 1 to 14 (MSSTPAQENGTVNG) show a composition bias toward polar residues. Residues 1–87 (MSSTPAQENG…PTTASNSSAP (87 aa)) are disordered. Residues 15-87 (ANAAPAPAPA…PTTASNSSAP (73 aa)) are compositionally biased toward low complexity. 3 C2H2-type zinc fingers span residues 95-120 (LVCR…CEKH), 131-155 (LTCQ…VRVH), and 161-183 (HKCD…VKTH). Disordered stretches follow at residues 395–539 (PTYA…PETY) and 566–621 (DEDD…PRIN). 2 stretches are compositionally biased toward low complexity: residues 409–423 (ASLA…PHSA) and 436–465 (SYTS…VSYP). A YPX[LI] motif 1 motif is present at residues 464 to 467 (YPTL). Residues 476–486 (PSTSGLGSNFT) are compositionally biased toward polar residues. The span at 502 to 511 (RAADEADRAP) shows a compositional bias: basic and acidic residues. Positions 515 to 525 (ASEQATVSSPS) are enriched in polar residues. Residues 583 to 595 (RNQQQRNQQQQQQ) are compositionally biased toward low complexity. The YPX[LI] motif 2 signature appears at 614–617 (YPVL).

The protein belongs to the pacC/RIM101 family. In terms of assembly, binds to DNA. Interacts with palA/prr-1, which binds to the two YPX[LI] motifs and is required for proteolytic processing. In terms of processing, activated by C-terminal proteolytic cleavage by signaling protease (probably palB/RIM13) at neutral to alkaline ambient pH.

It localises to the cytoplasm. The protein resides in the nucleus. Its function is as follows. Transcription factor that mediates regulation of both acid- and alkaline-expressed genes in response to ambient pH. At alkaline ambient pH, activates transcription of alkaline-expressed genes (including pacc-1 itself) and represses transcription of acid-expressed genes. This is pH-response transcription factor pacc-1 (pacc-1) from Neurospora crassa (strain ATCC 24698 / 74-OR23-1A / CBS 708.71 / DSM 1257 / FGSC 987).